Consider the following 289-residue polypeptide: Serine/threonine-protein phosphatase Pgam5, mitochondrial (289 aa).

The chain crosses the membrane as a helical span at residues 7–23; the sequence is FVCGTGAGLAAYYLQRL.

This sequence belongs to the phosphoglycerate mutase family. BPG-dependent PGAM subfamily. In terms of assembly, interacts with Pk92B/ASK1.

It is found in the mitochondrion outer membrane. It carries out the reaction O-phospho-L-seryl-[protein] + H2O = L-seryl-[protein] + phosphate. The catalysed reaction is O-phospho-L-threonyl-[protein] + H2O = L-threonyl-[protein] + phosphate. Its function is as follows. Displays phosphatase activity for serine/threonine residues, and dephosphorylates and activates Pk92B kinase. Has apparently no phosphoglycerate mutase activity. The sequence is that of Serine/threonine-protein phosphatase Pgam5, mitochondrial (Pgam5) from Drosophila melanogaster (Fruit fly).